A 448-amino-acid polypeptide reads, in one-letter code: Deoxyguanosinetriphosphate triphosphohydrolase-like protein (448 aa).

Residues 67–260 enclose the HD domain; it reads RLTHSLEVSQ…MELADDIAYG (194 aa).

The protein belongs to the dGTPase family. Type 2 subfamily.

The chain is Deoxyguanosinetriphosphate triphosphohydrolase-like protein from Aliivibrio fischeri (strain ATCC 700601 / ES114) (Vibrio fischeri).